Consider the following 399-residue polypeptide: MSKLILAINAGSSSLKFQLIEMPEEKIVTKGLIERIGLKDSVFTIEVNGDKIKETNDIADHEEAVNIMLDSFKKHGVIDSIYDINGTGHRVVHGGELFPESVYITDEVEKQIESLSELAPLHNPANLMGIRAFRKLLPEIPHVAVFDTSFHQTMPEKSFLYSLPYQYYKDYGIRKYGFHGTSHKYVSQRAADILGKPIEELRLISCHIGNGASIAAIDGGESVDTSMGFTPLAGVTMGTRSGNIDPALIPFIMEKTGKNAEEVLNTLNKESGLLGISGTSSDLRDIQGEAEEGKDRAQLALDVFASRIHKYIGSYATRMHGVDVIVFTAGVGENSDVVRAKVLEGLEFMGVYWDAKKNESIHGEEAFINYPHSPVKVIVIPTNEEVMIARDVINFGDLK.

N9 is a Mg(2+) binding site. Position 16 (K16) interacts with ATP. Residue R90 participates in substrate binding. D147 serves as the catalytic Proton donor/acceptor. Residues 207–211, 282–284, and 330–334 each bind ATP; these read HIGNG, DLR, and GVGEN. E384 is a Mg(2+) binding site.

The protein belongs to the acetokinase family. In terms of assembly, homodimer. Mg(2+) serves as cofactor. Mn(2+) is required as a cofactor.

The protein resides in the cytoplasm. The catalysed reaction is acetate + ATP = acetyl phosphate + ADP. It participates in metabolic intermediate biosynthesis; acetyl-CoA biosynthesis; acetyl-CoA from acetate: step 1/2. Catalyzes the formation of acetyl phosphate from acetate and ATP. Can also catalyze the reverse reaction. In Staphylococcus saprophyticus subsp. saprophyticus (strain ATCC 15305 / DSM 20229 / NCIMB 8711 / NCTC 7292 / S-41), this protein is Acetate kinase.